The following is a 507-amino-acid chain: Dihydrolipoyl dehydrogenase 1, mitochondrial (507 aa).

A mitochondrion-targeting transit peptide spans 1 to 36 (MAMASLARRKAYFLTRNLSNSPTDALRFSFSLSRGF). Residues 73-82 (EKRGALGGTC), Lys91, Gly155, and 184-186 (TGS) each bind FAD. Cys82 and Cys87 are oxidised to a cystine. NAD(+) contacts are provided by residues 221 to 228 (GAGYIGLE), Glu244, Val278, and Gly313. FAD is bound by residues Asp354 and 360–363 (MLAH). His486 functions as the Proton acceptor in the catalytic mechanism.

The protein belongs to the class-I pyridine nucleotide-disulfide oxidoreductase family. In terms of assembly, homodimer. Part of both the glycine cleavage system composed of four proteins: P, T, L and H and of the pyruvate dehydrogenase complex containing multiple copies of three enzymatic components: pyruvate dehydrogenase (E1), dihydrolipoamide acetyltransferase (E2) and lipoamide dehydrogenase (E3). FAD is required as a cofactor. Post-translationally, S-nytrosylated at unknown positions. As to expression, preferentially expressed in leaves, flowers and siliques and at a lower level in roots and stems.

Its subcellular location is the mitochondrion matrix. It carries out the reaction N(6)-[(R)-dihydrolipoyl]-L-lysyl-[protein] + NAD(+) = N(6)-[(R)-lipoyl]-L-lysyl-[protein] + NADH + H(+). Lipoamide dehydrogenase is a component of the glycine decarboxylase (GDC) or glycine cleavage system as well as of the alpha-ketoacid dehydrogenase complexes. LPD1 is probably the protein most often associated with the glycine decarboxylase complex while LPD2 is probably incorporated into alpha-ketoacid dehydrogenase complexes. This is Dihydrolipoyl dehydrogenase 1, mitochondrial (LPD1) from Arabidopsis thaliana (Mouse-ear cress).